The following is a 120-amino-acid chain: Peptidyl-tRNA hydrolase (120 aa).

It belongs to the PTH2 family. Homodimer.

The protein resides in the cytoplasm. It catalyses the reaction an N-acyl-L-alpha-aminoacyl-tRNA + H2O = an N-acyl-L-amino acid + a tRNA + H(+). Its function is as follows. The natural substrate for this enzyme may be peptidyl-tRNAs which drop off the ribosome during protein synthesis. This chain is Peptidyl-tRNA hydrolase, found in Saccharolobus solfataricus (strain ATCC 35092 / DSM 1617 / JCM 11322 / P2) (Sulfolobus solfataricus).